Consider the following 508-residue polypeptide: U4/U6 small nuclear ribonucleoprotein Prp31 (508 aa).

Positions 1–45 (MSLADELLADLEEAGEEDGLYPGGEEGESDGEPGERQVDGGLEDI) are disordered. Over residues 7 to 32 (LLADLEEAGEEDGLYPGGEEGESDGE) the composition is skewed to acidic residues. 2 coiled-coil regions span residues 96-131 (EADPEYRLIVAANNLTVEIDNELNIIHKFVRDKYSK) and 192-226 (DDELQRLEEACDMALELNQSKHRIYEYVESRMSFI). In terms of domain architecture, Nop spans 226–344 (IAPNLSIIVG…IERKFDKWQE (119 aa)). Disordered stretches follow at residues 345 to 368 (PPPVKQVKPLPAPLDGQRKKRGGR) and 442 to 461 (QSMTYGGKSTVRDRSSGTSS). The short motif at 362-375 (RKKRGGRRYRKMKE) is the Nuclear localization signal (NLS) element.

Belongs to the PRP31 family. As to quaternary structure, identified in the spliceosome B complex. Component of the U4/U6-U5 tri-snRNP complex. Component of some MLL1/MLL complex.

The protein resides in the nucleus. It is found in the nucleus speckle. Its subcellular location is the cajal body. Functionally, involved in pre-mRNA splicing as component of the spliceosome. Required for the assembly of the U4/U5/U6 tri-snRNP complex, one of the building blocks of the spliceosome. The chain is U4/U6 small nuclear ribonucleoprotein Prp31 (prpf31) from Danio rerio (Zebrafish).